We begin with the raw amino-acid sequence, 231 residues long: ATP-dependent dethiobiotin synthetase BioD (231 aa).

12 to 17 (DVGKTV) lines the ATP pocket. Thr16 contacts Mg(2+). Lys37 is a catalytic residue. Thr41 serves as a coordination point for substrate. ATP-binding positions include Asp50, 109–112 (EGAG), 170–171 (GS), and 200–202 (PAG). Asp50 and Glu109 together coordinate Mg(2+).

This sequence belongs to the dethiobiotin synthetase family. As to quaternary structure, homodimer. It depends on Mg(2+) as a cofactor.

Its subcellular location is the cytoplasm. The enzyme catalyses (7R,8S)-7,8-diammoniononanoate + CO2 + ATP = (4R,5S)-dethiobiotin + ADP + phosphate + 3 H(+). Its pathway is cofactor biosynthesis; biotin biosynthesis; biotin from 7,8-diaminononanoate: step 1/2. Its function is as follows. Catalyzes a mechanistically unusual reaction, the ATP-dependent insertion of CO2 between the N7 and N8 nitrogen atoms of 7,8-diaminopelargonic acid (DAPA, also called 7,8-diammoniononanoate) to form a ureido ring. The protein is ATP-dependent dethiobiotin synthetase BioD of Rhodococcus jostii (strain RHA1).